We begin with the raw amino-acid sequence, 668 residues long: Pentatricopeptide repeat-containing protein CRP1, chloroplastic (668 aa).

The transit peptide at 1–64 directs the protein to the chloroplast; it reads MPASLLPPTF…SASLTSPSPP (64 aa). PPR repeat units lie at residues 154-188, 189-226, 227-261, 262-297, 298-332, 333-367, 368-402, 403-437, 438-472, 473-507, 508-542, 543-577, 578-612, and 613-647; these read SPLLLNSLLAASAAASRPAVALRLLSLLREHDFLP, DLASYSHLLASLLNTRDPPDAALLERLLGDLRESRLEP, DAPLFSDLISAFARAALPDAALELLASAQAIGLTP, RSNAVTALISALGTAGRVAEAEALFLEFFLAGEIKP, RTRAYNALLKGYVRIASLKNAEQVLDEMSQCGVAP, DEATYSLLVDAYTRAGRWESARILLKEMEADGVKP, SSYVFSRILAGFRDRGDWQKAFAVLREMQASGVRP, DRHFYNVMIDTFGKYNCLGHAMDAFNKMREEGIEP, DVVTWNTLIDAHCKGGRHDRAAELFEEMRESNCPP, GTTTYNIMINLLGEQEHWEGVEAMLSEMKEQGLVP, NIITYTTLVDVYGRSGRYKEAIDCIEAMKADGLKP, SPTMYHALVNAYAQRGLADHALNVVKAMKADGLEV, SILVLNSLINAFGEDRRVVEAFSVLQFMRENGLRP, and DVITYTTLMKALIRVEQFDKVPVIYEEMITSGCAP.

The protein belongs to the PPR family. P subfamily. In terms of assembly, component of a multisubunit complex.

The protein resides in the plastid. The protein localises to the chloroplast stroma. Functionally, required for the translation of the chloroplast petA and petD mRNAs. Required for the processing of the petD mRNA from a polycistronic precursor. Binds with high affinity to the 5'-UTR of the chloroplastic petA transcript. Activates psaC and petA translation by binding their 5'-UTRs. This chain is Pentatricopeptide repeat-containing protein CRP1, chloroplastic, found in Zea mays (Maize).